We begin with the raw amino-acid sequence, 619 residues long: MYGFVNHALELLVIRNYGPEVWEDIKKEAQLDEEGQFLVRIIYDDSKTYDLVAAASKVLNLNAGEILQMFGKMFFVFCQESGYDTILRVLGSNVREFLQNLDALHDHLATIYPGMRAPSFRCTDADKGKGLILHYYSEREGLQDIVIGIIKTVAQQIHGTEIDMKVIQQRNEECDHTQFLIEEKESKEEDFYEDLDRFEENGTQESRISPYTFCKAFPFHIIFDRDLVVTQCGNAIYRVLPQLQPGNCSLLSVFSLVRPHIDISFHGILSHINTVFVLRSKEGLLDVEKSECEDELTGTEISCLRLKGQMIYLPEADSILFLCSPSVMNLDDLTRRGLYLSDIPLHDATRDLVLLGEQFREEYKLTQELEILTDRLQLTLRALEDEKKKTDTLLYSVLPPSVANELRHKRPVPAKRYDNVTILFSGIVGFNAFCSKHASGEGAMKIVNLLNDLYTRFDTLTDSRKNPFVYKVETVGDKYMTVSGLPEPCIHHARSICHLALDMMEIAGQVQVDGESVQITIGIHTGEVVTGVIGQRMPRYCLFGNTVNLTSRTETTGEKGKINVSEYTYRCLMTPENSDPQFHLEHRGPVSMKGKKEPMQVWFLSRKNTGTEETEQDEN.

Histidine 105 is a binding site for heme. The region spanning 421–554 (TILFSGIVGF…NTVNLTSRTE (134 aa)) is the Guanylate cyclase domain.

It belongs to the adenylyl cyclase class-4/guanylyl cyclase family. The active enzyme is formed by a heterodimer of an alpha and a beta subunit. Heterodimer with GUCY1A1. Can also form inactive homodimers in vitro. Heme serves as cofactor. As to expression, lung and brain.

Its subcellular location is the cytoplasm. It carries out the reaction GTP = 3',5'-cyclic GMP + diphosphate. With respect to regulation, activated by nitric oxide in the presence of magnesium or manganese ions, binding of NO to the heme iron increases catalytic activity up to 400 folds. Functionally, mediates responses to nitric oxide (NO) by catalyzing the biosynthesis of the signaling molecule cGMP. The chain is Guanylate cyclase soluble subunit beta-1 (GUCY1B1) from Bos taurus (Bovine).